Reading from the N-terminus, the 147-residue chain is Hemoglobin subunit deltaH (147 aa).

A Globin domain is found at 3–147 (RLTDSEKAEV…MANALAHKYH (145 aa)). Residues H64 and H93 each contribute to the heme b site.

Belongs to the globin family. Heterotetramer of two delta chains and two alpha chains. In terms of tissue distribution, red blood cells.

In Procavia capensis (Rock hyrax), this protein is Hemoglobin subunit deltaH.